Consider the following 126-residue polypeptide: UPF0538 protein C2orf76 homolog (126 aa).

This sequence belongs to the UPF0538 family.

This Pongo abelii (Sumatran orangutan) protein is UPF0538 protein C2orf76 homolog.